We begin with the raw amino-acid sequence, 371 residues long: uncharacterized protein (371 aa).

His-76 lines the Zn(2+) pocket. Residue Asp-78 is part of the active site. Residue Asp-106 coordinates Zn(2+). The Proton acceptor role is filled by Glu-139. Zn(2+) contacts are provided by Glu-140, Asp-163, and His-344.

It belongs to the peptidase M20A family. Zn(2+) is required as a cofactor.

Functionally, could be a peptidase. This is an uncharacterized protein from Bacillus subtilis (strain 168).